We begin with the raw amino-acid sequence, 370 residues long: Protein PELPK1 (370 aa).

An N-terminal signal peptide occupies residues 1 to 34 (MALMKKSLSAALLSSPLLIICLIALLADPFSVGA). Tandem repeats lie at residues 43-47 (PEIPK), 49-53 (PELPK), 54-58 (FEVPK), 60-64 (PEFPK), 65-69 (PELPK), 71-75 (PEFPK), 76-80 (PELPK), 82-86 (PEIPK), 87-91 (PELPK), 93-97 (PEIPK), 98-102 (PEETK), 104-108 (PDIPK), 109-113 (LELPK), 115-119 (PEIPK), 120-124 (PELPK), 126-130 (PEIPK), 131-135 (PELPK), 137-141 (PEIQK), 142-146 (PELPK), 148-152 (PEIPK), 153-157 (PELPK), 159-163 (PEIPK), 164-168 (PDLPK), 175-179 (PEVPK), 186-190 (PEAPK), 192-196 (PEIPK), 197-201 (PELPK), 203-207 (PEVPK), 214-218 (PEIQK), 219-223 (PELPK), 225-229 (PELPK), 231-235 (PEIQK), 236-240 (PELPK), 242-246 (PEVPK), 247-251 (LEAPK), 253-257 (PEIQK), 258-262 (PELPK), 264-268 (PELPK), 270-274 (PEIQK), 275-279 (PELPK), 281-285 (PEIQK), 286-290 (PELPK), 292-296 (PEVPK), 303-307 (PEVPK), 314-318 (PEIPK), 319-323 (PELPK), 325-329 (PEVPK), 330-334 (PELPK), 336-340 (PEITK), 344-348 (PEIPK), 355-359 (PQLPK), and 361-365 (PEFPK). A 52 X 5 AA tandem repeat of P-[DEGQ]-[AEFLIV]-[QPT]-K region spans residues 43-365 (PEIPKLPELP…QLPKLPEFPK (323 aa)). Over residues 65–223 (PELPKLPEFP…PEIQKPELPK (159 aa)) the composition is skewed to basic and acidic residues. Residues 65–370 (PELPKLPEFP…PEFPKVPGTP (306 aa)) are disordered. Basic and acidic residues predominate over residues 232 to 262 (EIQKPELPKLPEVPKLEAPKVPEIQKPELPK). Basic and acidic residues-rich tracts occupy residues 271-296 (EIQKPELPKMPEIQKPELPKVPEVPK) and 306-334 (PKSEAPKFPEIPKPELPKIPEVPKPELPK).

It is found in the secreted. Its subcellular location is the cell wall. Positive regulator of germination and plant growth. The chain is Protein PELPK1 from Arabidopsis thaliana (Mouse-ear cress).